We begin with the raw amino-acid sequence, 52 residues long: Transmembrane protein ORF52 (52 aa).

The next 2 membrane-spanning stretches (helical) occupy residues 11–31 (AFLG…EIIT) and 32–52 (FMAL…GLFV).

The protein resides in the host membrane. The polypeptide is Transmembrane protein ORF52 (Acidianus filamentous virus 1 (isolate United States/Yellowstone) (AFV-1)).